Reading from the N-terminus, the 352-residue chain is DNA integrity scanning protein DisA (352 aa).

The region spanning 3-143 is the DAC domain; sequence DERIVLALKS…FKYSLSEVSV (141 aa). ATP contacts are provided by residues Gly70, Leu88, and 101 to 105; that span reads IRHRT.

This sequence belongs to the DisA family. As to quaternary structure, homooctamer. Mg(2+) serves as cofactor.

The catalysed reaction is 2 ATP = 3',3'-c-di-AMP + 2 diphosphate. Its function is as follows. Participates in a DNA-damage check-point that is active prior to asymmetric division when DNA is damaged. DisA forms globular foci that rapidly scan along the chromosomes during sporulation, searching for lesions. When a lesion is present, DisA pauses at the lesion site. This triggers a cellular response that culminates in a temporary block in sporulation initiation. Also has diadenylate cyclase activity, catalyzing the condensation of 2 ATP molecules into cyclic di-AMP (c-di-AMP). c-di-AMP acts as a signaling molecule that couples DNA integrity with progression of sporulation. The rise in c-di-AMP level generated by DisA while scanning the chromosome, operates as a positive signal that advances sporulation; upon encountering a lesion, the DisA focus arrests at the damaged site and halts c-di-AMP synthesis. The chain is DNA integrity scanning protein DisA from Carboxydothermus hydrogenoformans (strain ATCC BAA-161 / DSM 6008 / Z-2901).